A 346-amino-acid chain; its full sequence is Protein farnesyltransferase/geranylgeranyltransferase type-1 subunit alpha (346 aa).

PFTA repeat units lie at residues 59–93, 94–128, 130–164, 165–198, and 205–239; these read RSTRALQLTGEAIQLNPGNYTVWQFRRVVLEALGV, DLREELKFVDRIAGENTKNYQIWHHRRWLAEKLGA, AVTNELEFTKKIFSQDAKNYHAWSHRQWVLQALGG, WEDELAYCQQLLEDDIYNNSAWNQRYFVVTRSPL, and MRELEVNYTVQAIRASPENESPWRYLRGLYKNDTQ.

The protein belongs to the protein prenyltransferase subunit alpha family. In terms of assembly, heterodimer of an alpha and a beta subunit. The cofactor is Mg(2+).

It catalyses the reaction L-cysteinyl-[protein] + (2E,6E)-farnesyl diphosphate = S-(2E,6E)-farnesyl-L-cysteinyl-[protein] + diphosphate. It carries out the reaction geranylgeranyl diphosphate + L-cysteinyl-[protein] = S-geranylgeranyl-L-cysteinyl-[protein] + diphosphate. Functionally, essential subunit of both the farnesyltransferase and the geranylgeranyltransferase complex. Contributes to the transfer of a farnesyl or geranylgeranyl moiety from farnesyl or geranylgeranyl diphosphate to a cysteine at the fourth position from the C-terminus of several proteins having the C-terminal sequence Cys-aliphatic-aliphatic-X. The polypeptide is Protein farnesyltransferase/geranylgeranyltransferase type-1 subunit alpha (FTA) (Solanum lycopersicum (Tomato)).